The sequence spans 442 residues: Cyclic AMP receptor-like protein B (442 aa).

The Extracellular portion of the chain corresponds to 1–16 (MGGDIHLCSMILGKNH). A helical transmembrane segment spans residues 17 to 37 (LIFLYFANLFGSTLSFLATII). The Cytoplasmic portion of the chain corresponds to 38-219 (TIVFYLVKKY…PKKIDTLIFY (182 aa)). The segment at 83-166 (YSSTPISIQN…LSSSDKNNTI (84 aa)) is disordered. Residues 91 to 103 (QNNNNKNNNLPKQ) show a composition bias toward low complexity. Over residues 112–122 (INKNHNNYCNY) the composition is skewed to polar residues. Low complexity predominate over residues 123-144 (STSATSSSSSSSSFSSTNSGSS). Over residues 145–166 (YEYQQPQKNQQTLSSSDKNNTI) the composition is skewed to polar residues. The helical transmembrane segment at 220–240 (LSISDFIAVSGIIIEQLIIIF) threads the bilayer. The Extracellular portion of the chain corresponds to 241–255 (NKEISKSIGFCIGER). The helical transmembrane segment at 256–276 (VSIHFGLLATLFWSNCIAYYL) threads the bilayer. Topologically, residues 277–289 (LRETYELKPYNIR) are cytoplasmic. Residues 290 to 310 (FVYFHIVCWGMALIGVASLFF) traverse the membrane as a helical segment. The Extracellular segment spans residues 311–334 (SKIITVSNIDQGGSWCSVSSSYQL). Residues 335–355 (YFWVIPLFVSFTWNLICYCLI) form a helical membrane-spanning segment. The Cytoplasmic segment spans residues 356 to 382 (YRKFNKIIGIYGIQSVQIKTIIIRKLS). The chain crosses the membrane as a helical span at residues 383–403 (FYLLAFLITWVWDVINNSIFL). At 404-410 (YEGKCPP) the chain is on the extracellular side. Residues 411–431 (FALWILQEFFSSGYGFFNSLA) form a helical membrane-spanning segment. Over 432–442 (YAVTTRFYSRK) the chain is Cytoplasmic.

This sequence belongs to the G-protein coupled receptor 5 family.

Its subcellular location is the membrane. Its function is as follows. Receptor for cAMP. This is Cyclic AMP receptor-like protein B (crlB) from Dictyostelium discoideum (Social amoeba).